A 188-amino-acid polypeptide reads, in one-letter code: Large ribosomal subunit protein eL18 (188 aa).

A disordered region spans residues 143–188 (RSAREAEKHFGPAPGVPHSHTKPHVRSKGRKFERARGRRASRAYKN). Composition is skewed to basic residues over residues 161–171 (SHTKPHVRSKG) and 178–188 (RGRRASRAYKN).

The protein belongs to the eukaryotic ribosomal protein eL18 family.

Its subcellular location is the cytoplasm. The chain is Large ribosomal subunit protein eL18 (rpl-18) from Caenorhabditis briggsae.